The following is a 177-amino-acid chain: N5-carboxyaminoimidazole ribonucleotide mutase (177 aa).

Residues S18, D21, and R48 each contribute to the substrate site.

It belongs to the AIR carboxylase family. Class I subfamily.

It catalyses the reaction 5-carboxyamino-1-(5-phospho-D-ribosyl)imidazole + H(+) = 5-amino-1-(5-phospho-D-ribosyl)imidazole-4-carboxylate. It participates in purine metabolism; IMP biosynthesis via de novo pathway; 5-amino-1-(5-phospho-D-ribosyl)imidazole-4-carboxylate from 5-amino-1-(5-phospho-D-ribosyl)imidazole (N5-CAIR route): step 2/2. In terms of biological role, catalyzes the conversion of N5-carboxyaminoimidazole ribonucleotide (N5-CAIR) to 4-carboxy-5-aminoimidazole ribonucleotide (CAIR). The polypeptide is N5-carboxyaminoimidazole ribonucleotide mutase (Pyrococcus horikoshii (strain ATCC 700860 / DSM 12428 / JCM 9974 / NBRC 100139 / OT-3)).